We begin with the raw amino-acid sequence, 129 residues long: Large ribosomal subunit protein bL20 (129 aa).

The protein belongs to the bacterial ribosomal protein bL20 family.

Its function is as follows. Binds directly to 23S ribosomal RNA and is necessary for the in vitro assembly process of the 50S ribosomal subunit. It is not involved in the protein synthesizing functions of that subunit. In Mycobacterium tuberculosis (strain ATCC 25177 / H37Ra), this protein is Large ribosomal subunit protein bL20.